The sequence spans 442 residues: Serine protease AprX (442 aa).

The Peptidase S8 domain occupies 122–439; it reads KALLDTATEA…AGAVNAENSV (318 aa). Residues D155 and H187 each act as charge relay system in the active site. A disordered region spans residues 318 to 337; that stretch reads DNNTASSDDDTVASFSSRGP. S384 serves as the catalytic Charge relay system. Positions 423 to 442 are disordered; that stretch reads EDPNIYGAGAVNAENSVPGQ.

The protein belongs to the peptidase S8 family.

The protein localises to the cytoplasm. With respect to regulation, is completely inhibited by phenylmethanesulphonylfluoride (PMSF) in vitro. In terms of biological role, displays serine protease activity. Seems to have a broad substrate specificity. This Bacillus subtilis (strain 168) protein is Serine protease AprX (aprX).